Here is a 268-residue protein sequence, read N- to C-terminus: Phosphate import ATP-binding protein PstB 3 (268 aa).

The ABC transporter domain maps to 15–254; that stretch reads LRTENLNVYY…DATESIFNNP (240 aa). 47–54 provides a ligand contact to ATP; that stretch reads GPSGCGKS.

Belongs to the ABC transporter superfamily. Phosphate importer (TC 3.A.1.7) family. In terms of assembly, the complex is composed of two ATP-binding proteins (PstB), two transmembrane proteins (PstC and PstA) and a solute-binding protein (PstS).

The protein localises to the cell inner membrane. The enzyme catalyses phosphate(out) + ATP + H2O = ADP + 2 phosphate(in) + H(+). Its function is as follows. Part of the ABC transporter complex PstSACB involved in phosphate import. Responsible for energy coupling to the transport system. The sequence is that of Phosphate import ATP-binding protein PstB 3 from Nostoc sp. (strain PCC 7120 / SAG 25.82 / UTEX 2576).